Consider the following 293-residue polypeptide: MSIVALLIGLGPLIGWGFFPTVASKFGGKPVHQIIGATVGTLIFAIILAVVTSSGFPTGTNLLFALLSGAGWGFGQIITFKAFELIGSSRAMPVTTAFQLLGASLWGVFALGNWPGIGHKIIGFTALVVILIGARMTVWSERKEASNAKNLRRAVVLLLIGEFGYWLYSAAPQATSIDGLTAFLPQAMGMVIVAVIYGFMNMKSENPFRNKITWLQIISGFFFAFGALTYLISAQPNMNGLATGFILSQTSVVLATLTGIYFLKQHKTSKEMVITIIGLVLILVAASVTVFIK.

10 helical membrane passes run 2–24 (SIVALLIGLGPLIGWGFFPTVAS), 34–56 (IIGATVGTLIFAIILAVVTSSGF), 63–80 (LFALLSGAGWGFGQIITF), 95–117 (TTAFQLLGASLWGVFALGNWPGI), 122–139 (IGFTALVVILIGARMTVW), 154–171 (AVVLLLIGEFGYWLYSAA), 180–202 (LTAFLPQAMGMVIVAVIYGFMNM), 212–234 (ITWLQIISGFFFAFGALTYLISA), 241–263 (LATGFILSQTSVVLATLTGIYFL), and 273–292 (VITIIGLVLILVAASVTVFI).

This sequence belongs to the GRP transporter (TC 2.A.7.5) family.

The protein resides in the cell membrane. Functionally, could be involved in the uptake of ribose. This Staphylococcus aureus (strain Mu50 / ATCC 700699) protein is Putative ribose uptake protein RbsU (rbsU).